Consider the following 85-residue polypeptide: Small ribosomal subunit protein bS16c (85 aa).

The protein belongs to the bacterial ribosomal protein bS16 family.

The protein localises to the plastid. The protein resides in the chloroplast. This chain is Small ribosomal subunit protein bS16c, found in Saccharum hybrid (Sugarcane).